A 211-amino-acid chain; its full sequence is MKKILMLIELSERNAIGRPVRITIRELADALNTSPQTVLRLLAELEDEGLIERKTEGRRTYIEILPKGLDFLQDICDKISNALSKGVIVGEVVSGLGEGAYYVRQYEPLIEEYLGFKPFPGTLNVKILFPKTVLDAVCNIRPVIIPGFVKDGRTFGDVKAYPVMIGGIKGAIVVPSRTIHPPRIAEIIAPVNLREALKLKDGDRVRLEVIQ.

The segment at 1–85 (MKKILMLIEL…CDKISNALSK (85 aa)) is H-T-H motif-like. The riboflavin kinase stretch occupies residues 86-211 (GVIVGEVVSG…GDRVRLEVIQ (126 aa)). 95–100 (GLGEGA) contacts CDP. Mg(2+) is bound by residues Thr122 and Asn124. Positions 178 and 186 each coordinate FMN. Residue 191–194 (VNLR) participates in CDP binding.

Belongs to the archaeal riboflavin kinase family. Mg(2+) is required as a cofactor.

The enzyme catalyses riboflavin + CTP = CDP + FMN + H(+). The protein operates within cofactor biosynthesis; FMN biosynthesis; FMN from riboflavin (CTP route): step 1/1. Functionally, catalyzes the CTP-dependent phosphorylation of riboflavin (vitamin B2) to form flavin mononucleotide (FMN). This is Riboflavin kinase (ribK) from Thermococcus kodakarensis (strain ATCC BAA-918 / JCM 12380 / KOD1) (Pyrococcus kodakaraensis (strain KOD1)).